The sequence spans 424 residues: Neurotensin receptor type 1 (424 aa).

At Met1 to Thr67 the chain is on the extracellular side. 3 N-linked (GlcNAc...) asparagine glycosylation sites follow: Asn4, Asn38, and Asn42. The helical transmembrane segment at Ala68 to Leu88 threads the bilayer. The Cytoplasmic portion of the chain corresponds to Ala89–His102. Residues Tyr103–Val122 traverse the membrane as a helical segment. The Extracellular portion of the chain corresponds to Glu123–Arg142. Residues Cys141 and Cys224 are joined by a disulfide bond. A helical transmembrane segment spans residues Gly143–Val164. Topologically, residues Glu165 to Arg184 are cytoplasmic. A helical membrane pass occupies residues Thr185–Phe205. Residues Thr206 to Lys234 lie on the Extracellular side of the membrane. N-linked (GlcNAc...) asparagine glycosylation is present at Asn211. The helical transmembrane segment at Val235–Ile259 threads the bilayer. The Cytoplasmic portion of the chain corresponds to Ala260 to Leu308. Residues Val309–Met330 form a helical membrane-spanning segment. A neurotensin binding region spans residues Val326–Tyr349. Residues Phe331–His348 lie on the Extracellular side of the membrane. The chain crosses the membrane as a helical span at residues Tyr349–Tyr369. At Asn370–Tyr424 the chain is on the cytoplasmic side. S-palmitoyl cysteine attachment occurs at residues Cys386 and Cys388. The disordered stretch occupies residues Arg398–Tyr424. The span at Arg403 to Tyr424 shows a compositional bias: polar residues.

It belongs to the G-protein coupled receptor 1 family. Neurotensin receptor subfamily. NTSR1 sub-subfamily. Interacts (palmitoylated form) with GNA11. N-glycosylated. In terms of processing, palmitoylated; this is required for normal localization at membrane rafts and normal GNA11-mediated activation of down-stream signaling cascades. The palmitoylation level increases in response to neurotensin treatment.

The protein localises to the cell membrane. It is found in the membrane raft. Its function is as follows. G-protein coupled receptor for the tridecapeptide neurotensin (NTS). Signaling is effected via G proteins that activate a phosphatidylinositol-calcium second messenger system. Signaling leads to the activation of downstream MAP kinases and protects cells against apoptosis. This Mus musculus (Mouse) protein is Neurotensin receptor type 1 (Ntsr1).